The primary structure comprises 349 residues: Homeobox-leucine zipper protein HOX7 (349 aa).

Positions 42–186 are disordered; that stretch reads RATRRDEQDD…PKQKSDLANR (145 aa). 2 stretches are compositionally biased toward polar residues: residues 89-99 and 121-135; these read SAETGSANSEM and SSPS…RQQV. Positions 150 to 209 form a DNA-binding region, homeobox; the sequence is GARKKLRLSKEQSSFLEDSFKEHSTLTPKQKSDLANRLNLRPRQVEVWFQNRRARTKLKQ. The span at 167-183 shows a compositional bias: basic and acidic residues; the sequence is DSFKEHSTLTPKQKSDL. The tract at residues 208-252 is leucine-zipper; that stretch reads KQTEVDCEHLKRCCERLTRENRRLQREVAELRGTLRTTTSSYPPL.

Belongs to the HD-ZIP homeobox family. Class II subfamily. In terms of assembly, homodimer. May form a heterodimer with HOX1, HOX2 or HOX3. Expressed in seedlings, roots, leaves, nodes, internodes, flowers and embryo.

It localises to the nucleus. Functionally, probable transcription factor that binds to the DNA sequence 5'-CAAT[GC]ATTG-3'. This Oryza sativa subsp. japonica (Rice) protein is Homeobox-leucine zipper protein HOX7 (HOX7).